Consider the following 223-residue polypeptide: Urease accessory protein UreF (223 aa).

It belongs to the UreF family. In terms of assembly, ureD, UreF and UreG form a complex that acts as a GTP-hydrolysis-dependent molecular chaperone, activating the urease apoprotein by helping to assemble the nickel containing metallocenter of UreC. The UreE protein probably delivers the nickel.

Its subcellular location is the cytoplasm. Its function is as follows. Required for maturation of urease via the functional incorporation of the urease nickel metallocenter. This chain is Urease accessory protein UreF, found in Rhizobium leguminosarum bv. viciae.